Consider the following 446-residue polypeptide: Ribosomal protein uS12 methylthiotransferase RimO (446 aa).

In terms of domain architecture, MTTase N-terminal spans 6–116 (PNIGFISLGC…VMQQVHKYVP (111 aa)). [4Fe-4S] cluster contacts are provided by Cys15, Cys51, Cys80, Cys148, Cys152, and Cys155. The Radical SAM core domain occupies 134–375 (LTPKHYAYLK…MQLQQEISAA (242 aa)). The region spanning 378 to 446 (QQKVGKVFTV…AYDLYASLIN (69 aa)) is the TRAM domain.

It belongs to the methylthiotransferase family. RimO subfamily. The cofactor is [4Fe-4S] cluster.

The protein localises to the cytoplasm. The enzyme catalyses L-aspartate(89)-[ribosomal protein uS12]-hydrogen + (sulfur carrier)-SH + AH2 + 2 S-adenosyl-L-methionine = 3-methylsulfanyl-L-aspartate(89)-[ribosomal protein uS12]-hydrogen + (sulfur carrier)-H + 5'-deoxyadenosine + L-methionine + A + S-adenosyl-L-homocysteine + 2 H(+). Its function is as follows. Catalyzes the methylthiolation of an aspartic acid residue of ribosomal protein uS12. The polypeptide is Ribosomal protein uS12 methylthiotransferase RimO (Pasteurella multocida (strain Pm70)).